The primary structure comprises 530 residues: Type 2 DNA topoisomerase 6 subunit B (530 aa).

Residues N42, D76, S97–K98, G106–K113, and K427 contribute to the ATP site.

The protein belongs to the TOP6B family. Homodimer. Heterotetramer of two Top6A and two Top6B chains.

It catalyses the reaction ATP-dependent breakage, passage and rejoining of double-stranded DNA.. Functionally, relaxes both positive and negative superturns and exhibits a strong decatenase activity. This Saccharolobus solfataricus (strain ATCC 35092 / DSM 1617 / JCM 11322 / P2) (Sulfolobus solfataricus) protein is Type 2 DNA topoisomerase 6 subunit B.